A 693-amino-acid chain; its full sequence is Elongation factor G (693 aa).

In terms of domain architecture, tr-type G spans 8–282 (KNTRNIGIMA…AVIDYLPSPL (275 aa)). Residues 17 to 24 (AHIDAGKT), 81 to 85 (DTPGH), and 135 to 138 (NKMD) each bind GTP.

This sequence belongs to the TRAFAC class translation factor GTPase superfamily. Classic translation factor GTPase family. EF-G/EF-2 subfamily.

It localises to the cytoplasm. Catalyzes the GTP-dependent ribosomal translocation step during translation elongation. During this step, the ribosome changes from the pre-translocational (PRE) to the post-translocational (POST) state as the newly formed A-site-bound peptidyl-tRNA and P-site-bound deacylated tRNA move to the P and E sites, respectively. Catalyzes the coordinated movement of the two tRNA molecules, the mRNA and conformational changes in the ribosome. In Staphylococcus epidermidis (strain ATCC 35984 / DSM 28319 / BCRC 17069 / CCUG 31568 / BM 3577 / RP62A), this protein is Elongation factor G.